We begin with the raw amino-acid sequence, 99 residues long: MPHYNCHSVLCASKRTRGAVGQRILHMLAQGGRIEIEKNQKKRIASVKCLTRDGWHHPGVDLDLFRKLKRKKAVSSSGGGPYRITRRGLELVRSELDNR.

Belongs to the UPF0386 family.

This chain is UPF0386 protein mll0189, found in Mesorhizobium japonicum (strain LMG 29417 / CECT 9101 / MAFF 303099) (Mesorhizobium loti (strain MAFF 303099)).